Consider the following 904-residue polypeptide: Protein translocase subunit SecA (904 aa).

Residues glutamine 89, glycine 107–threonine 111, and aspartate 496 each bind ATP. The segment at glycine 870–arginine 904 is disordered. The span at serine 876–serine 889 shows a compositional bias: low complexity.

This sequence belongs to the SecA family. In terms of assembly, monomer and homodimer. Part of the essential Sec protein translocation apparatus which comprises SecA, SecYEG and auxiliary proteins SecDF. Other proteins may also be involved.

The protein localises to the cell inner membrane. Its subcellular location is the cytoplasm. It carries out the reaction ATP + H2O + cellular proteinSide 1 = ADP + phosphate + cellular proteinSide 2.. In terms of biological role, part of the Sec protein translocase complex. Interacts with the SecYEG preprotein conducting channel. Has a central role in coupling the hydrolysis of ATP to the transfer of proteins into and across the cell membrane, serving as an ATP-driven molecular motor driving the stepwise translocation of polypeptide chains across the membrane. The protein is Protein translocase subunit SecA of Leptospira borgpetersenii serovar Hardjo-bovis (strain JB197).